A 162-amino-acid polypeptide reads, in one-letter code: uncharacterized protein (162 aa).

The signal sequence occupies residues 1–21 (MRLCGLLIFLSYIVYVDNAVT).

This is an uncharacterized protein from Caenorhabditis elegans.